We begin with the raw amino-acid sequence, 1128 residues long: Major DNA-binding protein (1128 aa).

Residues 453–466 (CELCQGTCPASCIH) fold into a zinc finger. The required for nuclear localization stretch occupies residues 1098-1128 (QIEEFAPQATLSTLAASRKRKITSILSDIDL).

Belongs to the herpesviridae major DNA-binding protein family. Homooligomers. Forms double-helical filaments necessary for the formation of replication compartments within the host nucleus. Interacts with the origin-binding protein. Interacts with the helicase primase complex; this interaction stimulates primer synthesis activity of the helicase-primase complex. Interacts with the DNA polymerase. Interacts with the alkaline exonuclease; this interaction increases its nuclease processivity.

The protein resides in the host nucleus. Single-stranded DNA-binding protein required for DNA replication. In terms of biological role, plays several crucial roles in viral infection. Participates in the opening of the viral DNA origin to initiate replication by interacting with the origin-binding protein. May disrupt loops, hairpins and other secondary structures present on ssDNA to reduce and eliminate pausing of viral DNA polymerase at specific sites during elongation. Promotes viral DNA recombination by performing strand-transfer, characterized by the ability to transfer a DNA strand from a linear duplex to a complementary single-stranded DNA circle. Can also catalyze the renaturation of complementary single strands. Additionally, reorganizes the host cell nucleus, leading to the formation of prereplicative sites and replication compartments. This process is driven by the protein which can form double-helical filaments in the absence of DNA. In Saimiri sciureus (Common squirrel monkey), this protein is Major DNA-binding protein.